A 382-amino-acid polypeptide reads, in one-letter code: D-galactonate dehydratase (382 aa).

D183 lines the Mg(2+) pocket. Catalysis depends on H185, which acts as the Proton donor. Residues E209 and E235 each contribute to the Mg(2+) site. The active-site Proton acceptor is H285.

This sequence belongs to the mandelate racemase/muconate lactonizing enzyme family. GalD subfamily. Mg(2+) is required as a cofactor.

It catalyses the reaction D-galactonate = 2-dehydro-3-deoxy-D-galactonate + H2O. The protein operates within carbohydrate acid metabolism; D-galactonate degradation; D-glyceraldehyde 3-phosphate and pyruvate from D-galactonate: step 1/3. In terms of biological role, catalyzes the dehydration of D-galactonate to 2-keto-3-deoxy-D-galactonate. The protein is D-galactonate dehydratase of Escherichia coli O9:H4 (strain HS).